The sequence spans 287 residues: ATP synthase gamma chain (287 aa).

The protein belongs to the ATPase gamma chain family. In terms of assembly, F-type ATPases have 2 components, CF(1) - the catalytic core - and CF(0) - the membrane proton channel. CF(1) has five subunits: alpha(3), beta(3), gamma(1), delta(1), epsilon(1). CF(0) has three main subunits: a, b and c.

Its subcellular location is the cell inner membrane. In terms of biological role, produces ATP from ADP in the presence of a proton gradient across the membrane. The gamma chain is believed to be important in regulating ATPase activity and the flow of protons through the CF(0) complex. In Edwardsiella ictaluri (strain 93-146), this protein is ATP synthase gamma chain.